Consider the following 297-residue polypeptide: 4-hydroxy-tetrahydrodipicolinate synthase (297 aa).

Thr-46 is a binding site for pyruvate. Catalysis depends on Tyr-134, which acts as the Proton donor/acceptor. The active-site Schiff-base intermediate with substrate is the Lys-163. Ile-205 contributes to the pyruvate binding site.

The protein belongs to the DapA family. Homotetramer; dimer of dimers.

It is found in the cytoplasm. The enzyme catalyses L-aspartate 4-semialdehyde + pyruvate = (2S,4S)-4-hydroxy-2,3,4,5-tetrahydrodipicolinate + H2O + H(+). The protein operates within amino-acid biosynthesis; L-lysine biosynthesis via DAP pathway; (S)-tetrahydrodipicolinate from L-aspartate: step 3/4. Catalyzes the condensation of (S)-aspartate-beta-semialdehyde [(S)-ASA] and pyruvate to 4-hydroxy-tetrahydrodipicolinate (HTPA). This Thermoanaerobacter pseudethanolicus (strain ATCC 33223 / 39E) (Clostridium thermohydrosulfuricum) protein is 4-hydroxy-tetrahydrodipicolinate synthase.